A 103-amino-acid polypeptide reads, in one-letter code: Vesicle-associated membrane protein 3 (103 aa).

The disordered stretch occupies residues 1 to 25 (MSTGVPSGSSAATGSNRRLQQTQNQ). Over 1-81 (MSTGVPSGSS…KRKYWWKNCK (81 aa)) the chain is Cytoplasmic. Residues 18–78 (RLQQTQNQVD…AKLKRKYWWK (61 aa)) form the v-SNARE coiled-coil homology domain. Residues K70, K72, and K81 each participate in a glycyl lysine isopeptide (Lys-Gly) (interchain with G-Cter in ubiquitin) cross-link. A helical; Anchor for type IV membrane protein transmembrane segment spans residues 82–102 (MWAIGISVLVIIVIIIIVWCV). S103 is a topological domain (vesicular).

The protein belongs to the synaptobrevin family. In terms of assembly, interacts with POPDC1 (via the C-terminus cytoplasmic tail). Interacts with BCAP31; involved in VAMP3 export from the endoplasmic reticulum. Interacts with BAIAP3; this interaction is increased in the presence of calcium. Interacts with PICALM. Ubiquitinated by RNF167 at Lys-70, Lys-72 and Lys-81, regulating the recycling endosome pathway. In terms of processing, (Microbial infection) Targeted and hydrolyzed by C.botulinum neurotoxin type D (BoNT/D, botD) which hydrolyzes the 46-Lys-|-Leu-47 bond and probably inhibits neurotransmitter release. Post-translationally, (Microbial infection) Targeted and hydrolyzed by C.botulinum neurotoxin type F (BoNT/F, botF) which hydrolyzes the 45-Gln-|-Lys-46 bond and probably inhibits neurotransmitter release. (Microbial infection) Targeted and hydrolyzed by C.tetani toxin (tetX) which hydrolyzes the 63-Gln-|-Phe-64 bond and probably inhibits neurotransmitter release. As to expression, ubiquitous.

It is found in the early endosome membrane. The protein localises to the recycling endosome membrane. The protein resides in the synapse. It localises to the synaptosome. Functionally, SNARE involved in vesicular transport from the late endosomes to the trans-Golgi network. This chain is Vesicle-associated membrane protein 3 (Vamp3), found in Rattus norvegicus (Rat).